A 201-amino-acid chain; its full sequence is MELVMKDAQGALTVSETTFGRDFNEALVHQVVVAYAAGARQGTRAQKTRAEVSGSGKKPWRQKGTGRARSGSIKSPIWRSGGVSFAAKPQDHSQKVNKKMYRGALKSILSELVRQDRLIVVEKFSVEAPKTKLLAQKLKDMALEDVLIVTAEVDENLYLAARNLYKVDVRDAATIDPVSLIAFDKVVMTADAVKQVEEMLA.

The disordered stretch occupies residues 44-71 (RAQKTRAEVSGSGKKPWRQKGTGRARSG).

Belongs to the universal ribosomal protein uL4 family. Part of the 50S ribosomal subunit.

In terms of biological role, one of the primary rRNA binding proteins, this protein initially binds near the 5'-end of the 23S rRNA. It is important during the early stages of 50S assembly. It makes multiple contacts with different domains of the 23S rRNA in the assembled 50S subunit and ribosome. Its function is as follows. Forms part of the polypeptide exit tunnel. The sequence is that of Large ribosomal subunit protein uL4 from Proteus mirabilis (strain HI4320).